Here is a 291-residue protein sequence, read N- to C-terminus: DNA repair protein RecO (291 aa).

The protein belongs to the RecO family.

Functionally, involved in DNA repair and RecF pathway recombination. The protein is DNA repair protein RecO of Cupriavidus pinatubonensis (strain JMP 134 / LMG 1197) (Cupriavidus necator (strain JMP 134)).